Consider the following 63-residue polypeptide: Large ribosomal subunit protein uL30 (63 aa).

Belongs to the universal ribosomal protein uL30 family. In terms of assembly, part of the 50S ribosomal subunit.

The protein is Large ribosomal subunit protein uL30 of Geobacillus stearothermophilus (Bacillus stearothermophilus).